We begin with the raw amino-acid sequence, 278 residues long: MRGEASRIADRESRDSLAPKLRDTREDAWRIGNELFTITKVLDDSIQLERALTDPSRPVADKVAVLKELLGDNAHPMTMEIMTDLVSRRWSRARDIANAVEDFGVDAMMYYADATDATLQVSIELSELHSALLNLPVVRAKLYDYQATSEARVKLFREVFSGKTLNKVTMRLAEHATCNLRRRRYLETIQWLINKFSRHMGESMVTVTTATPLKKEQIKRLVEVYSAKVGRQVHINSVVDPTVLGGMRIQVGDEVTDNTVVAQLQNLHRKVQTEATPA.

Belongs to the ATPase delta chain family. In terms of assembly, F-type ATPases have 2 components, F(1) - the catalytic core - and F(0) - the membrane proton channel. F(1) has five subunits: alpha(3), beta(3), gamma(1), delta(1), epsilon(1). F(0) has three main subunits: a(1), b(2) and c(10-14). The alpha and beta chains form an alternating ring which encloses part of the gamma chain. F(1) is attached to F(0) by a central stalk formed by the gamma and epsilon chains, while a peripheral stalk is formed by the delta and b chains.

It localises to the cell membrane. Functionally, f(1)F(0) ATP synthase produces ATP from ADP in the presence of a proton or sodium gradient. F-type ATPases consist of two structural domains, F(1) containing the extramembraneous catalytic core and F(0) containing the membrane proton channel, linked together by a central stalk and a peripheral stalk. During catalysis, ATP synthesis in the catalytic domain of F(1) is coupled via a rotary mechanism of the central stalk subunits to proton translocation. This protein is part of the stalk that links CF(0) to CF(1). It either transmits conformational changes from CF(0) to CF(1) or is implicated in proton conduction. This chain is ATP synthase subunit delta, found in Bifidobacterium longum (strain DJO10A).